Consider the following 355-residue polypeptide: Heterogeneous nuclear ribonucleoprotein D0 (355 aa).

Residues Met-1–Ala-92 form a disordered region. Ser-2 bears the N-acetylserine mark. 2 stretches are compositionally biased toward low complexity: residues Ala-11–Gly-20 and Glu-27–Gly-42. Positions Ser-43–Gly-58 are enriched in gly residues. Residues Glu-64–Asn-73 show a composition bias toward basic and acidic residues. Position 71 is a phosphoserine (Ser-71). Lys-72 is covalently cross-linked (Glycyl lysine isopeptide (Lys-Gly) (interchain with G-Cter in SUMO2)). A phosphoserine mark is found at Ser-80, Ser-82, and Ser-83. Thr-91 carries the post-translational modification Phosphothreonine. 2 RRM domains span residues Trp-97–Glu-179 and Lys-182–Glu-261. Lys-119 is subject to N6-methyllysine. Thr-127 is subject to Phosphothreonine. Residue Lys-129 forms a Glycyl lysine isopeptide (Lys-Gly) (interchain with G-Cter in SUMO2) linkage. Residue Lys-165 is modified to N6-acetyllysine. Ser-190 bears the Phosphoserine mark. Thr-193 carries the phosphothreonine modification. Lys-197 is covalently cross-linked (Glycyl lysine isopeptide (Lys-Gly) (interchain with G-Cter in SUMO2)). Lys-243 and Lys-251 each carry N6-acetyllysine. Residue Tyr-263 is modified to Omega-N-methylarginine. Position 271 is a phosphoserine (Ser-271). Arg-272 is modified (omega-N-methylarginine). An N6-acetyllysine modification is found at Gly-273. Omega-N-methylarginine occurs at positions 278, 280, and 282. Position 292 is an N6-acetyllysine (Gln-292). Arg-345 is subject to Asymmetric dimethylarginine; alternate. The residue at position 345 (Arg-345) is a Dimethylated arginine; alternate. Arg-345 carries the post-translational modification Omega-N-methylarginine; alternate.

In terms of assembly, identified in a IGF2BP1-dependent mRNP granule complex containing untranslated mRNAs. Part of a complex associated with the FOS mCRD domain and consisting of PABPC1, PAIP1, CSDE1/UNR and SYNCRIP. Interacts with IGF2BP2. Interacts with GTPBP1. Interacts with EIF4G1; the interaction requires RNA. Interacts with EIF3B and RPS3. Post-translationally, arg-345 is dimethylated, probably to asymmetric dimethylarginine. In terms of processing, methylated by PRMT1, in an insulin-dependent manner. The PRMT1-mediated methylation regulates tyrosine phosphorylation.

The protein resides in the nucleus. It is found in the cytoplasm. Binds with high affinity to RNA molecules that contain AU-rich elements (AREs) found within the 3'-UTR of many proto-oncogenes and cytokine mRNAs. Also binds to double- and single-stranded DNA sequences in a specific manner and functions a transcription factor. Each of the RNA-binding domains specifically can bind solely to a single-stranded non-monotonous 5'-UUAG-3' sequence and also weaker to the single-stranded 5'-TTAGGG-3' telomeric DNA repeat. Binds RNA oligonucleotides with 5'-UUAGGG-3' repeats more tightly than the telomeric single-stranded DNA 5'-TTAGGG-3' repeats. Binding of RRM1 to DNA inhibits the formation of DNA quadruplex structure which may play a role in telomere elongation. May be involved in translationally coupled mRNA turnover. Implicated with other RNA-binding proteins in the cytoplasmic deadenylation/translational and decay interplay of the FOS mRNA mediated by the major coding-region determinant of instability (mCRD) domain. May play a role in the regulation of the rhythmic expression of circadian clock core genes. Directly binds to the 3'UTR of CRY1 mRNA and induces CRY1 rhythmic translation. May also be involved in the regulation of PER2 translation. This is Heterogeneous nuclear ribonucleoprotein D0 (HNRNPD) from Homo sapiens (Human).